Consider the following 990-residue polypeptide: F-box/LRR-repeat protein 15 (990 aa).

One can recognise an F-box domain in the interval 190-236 (FEVHIDLTDDLLHMVFSFLNHVDLCRSAMVCRQWRVASAHEDFWRVL). LRR repeat units follow at residues 237-258 (NFEN…YPNA), 280-303 (LRNL…ALGE), 317-341 (LGNG…KCRV), 348-373 (CPQL…LLQL), 397-423 (LESL…CANL), 441-465 (LPML…WIAN), 466-477 (SPALEVLELDNC), 478-503 (NLLT…KFTD), 519-542 (CPAL…KQEN), 550-574 (CHSL…IFSD), 589-612 (CESL…GCRA), 614-633 (TSLE…GCDH), 640-652 (QPVA…LGIC), 653-678 (PKLS…VLSE), 734-756 (LPNL…VFKS), 758-782 (IQLK…LYKE), 785-809 (LPAL…LLAC), 813-839 (LTHL…LFDY), 882-893 (FYHLSTLNLSLS), 894-914 (VNLK…LSNC), 915-937 (CSLE…SCNM), and 949-973 (CSSL…KFRT).

The polypeptide is F-box/LRR-repeat protein 15 (FBL15) (Arabidopsis thaliana (Mouse-ear cress)).